Consider the following 153-residue polypeptide: Xanthine-guanine phosphoribosyltransferase (153 aa).

Residues 37–38, Arg-69, and 88–96 each bind 5-phospho-alpha-D-ribose 1-diphosphate; these read RG and DDLVDTGGT. Arg-69 provides a ligand contact to GMP. Asp-89 is a Mg(2+) binding site. 2 residues coordinate guanine: Asp-92 and Ile-135. Xanthine-binding residues include Asp-92 and Ile-135. GMP contacts are provided by residues 92–96 and 134–135; these read DTGGT and WI.

This sequence belongs to the purine/pyrimidine phosphoribosyltransferase family. XGPT subfamily. Homotetramer. Requires Mg(2+) as cofactor.

The protein resides in the cell membrane. It catalyses the reaction GMP + diphosphate = guanine + 5-phospho-alpha-D-ribose 1-diphosphate. It carries out the reaction XMP + diphosphate = xanthine + 5-phospho-alpha-D-ribose 1-diphosphate. The catalysed reaction is IMP + diphosphate = hypoxanthine + 5-phospho-alpha-D-ribose 1-diphosphate. Its pathway is purine metabolism; GMP biosynthesis via salvage pathway; GMP from guanine: step 1/1. It participates in purine metabolism; XMP biosynthesis via salvage pathway; XMP from xanthine: step 1/1. Its function is as follows. Purine salvage pathway enzyme that catalyzes the transfer of the ribosyl-5-phosphate group from 5-phospho-alpha-D-ribose 1-diphosphate (PRPP) to the N9 position of the 6-oxopurines guanine and xanthine to form the corresponding ribonucleotides GMP (guanosine 5'-monophosphate) and XMP (xanthosine 5'-monophosphate), with the release of PPi. To a lesser extent, also acts on hypoxanthine. This Buchnera aphidicola subsp. Baizongia pistaciae (strain Bp) protein is Xanthine-guanine phosphoribosyltransferase.